The sequence spans 53 residues: Conotoxin Cal6.31 (53 aa).

The N-terminal stretch at M1–A24 is a signal peptide. Cystine bridges form between C29–C43, C36–C47, and C42–C51.

Belongs to the conotoxin O1 superfamily. As to expression, expressed by the venom duct.

The protein resides in the secreted. Functionally, probable neurotoxin. This is Conotoxin Cal6.31 from Californiconus californicus (California cone).